The primary structure comprises 395 residues: Succinyl-diaminopimelate desuccinylase (395 aa).

Histidine 74 serves as a coordination point for Zn(2+). The active site involves aspartate 76. Aspartate 107 contacts Zn(2+). Glutamate 141 (proton acceptor) is an active-site residue. Glutamate 142, glutamate 170, and histidine 368 together coordinate Zn(2+).

This sequence belongs to the peptidase M20A family. DapE subfamily. In terms of assembly, homodimer. Zn(2+) is required as a cofactor. It depends on Co(2+) as a cofactor.

It carries out the reaction N-succinyl-(2S,6S)-2,6-diaminopimelate + H2O = (2S,6S)-2,6-diaminopimelate + succinate. Its pathway is amino-acid biosynthesis; L-lysine biosynthesis via DAP pathway; LL-2,6-diaminopimelate from (S)-tetrahydrodipicolinate (succinylase route): step 3/3. In terms of biological role, catalyzes the hydrolysis of N-succinyl-L,L-diaminopimelic acid (SDAP), forming succinate and LL-2,6-diaminopimelate (DAP), an intermediate involved in the bacterial biosynthesis of lysine and meso-diaminopimelic acid, an essential component of bacterial cell walls. In Brucella melitensis biotype 2 (strain ATCC 23457), this protein is Succinyl-diaminopimelate desuccinylase.